The following is a 217-amino-acid chain: Protein OPI10 homolog (217 aa).

Belongs to the OPI10 family.

The protein is Protein OPI10 homolog of Dictyostelium discoideum (Social amoeba).